Consider the following 783-residue polypeptide: DNA ligase (783 aa).

NAD(+) contacts are provided by residues 42–46, 91–92, and Glu125; these read DAEYD and SL. Catalysis depends on Lys127, which acts as the N6-AMP-lysine intermediate. NAD(+) contacts are provided by Arg148, Glu185, Lys302, and Lys326. Cys421, Cys423, Cys445, and Cys451 together coordinate Zn(2+). One can recognise a BRCT domain in the interval 705-783; sequence KTDTAVAGKT…EDEWLELVAG (79 aa).

This sequence belongs to the NAD-dependent DNA ligase family. LigA subfamily. Requires Mg(2+) as cofactor. It depends on Mn(2+) as a cofactor.

The enzyme catalyses NAD(+) + (deoxyribonucleotide)n-3'-hydroxyl + 5'-phospho-(deoxyribonucleotide)m = (deoxyribonucleotide)n+m + AMP + beta-nicotinamide D-nucleotide.. Its function is as follows. DNA ligase that catalyzes the formation of phosphodiester linkages between 5'-phosphoryl and 3'-hydroxyl groups in double-stranded DNA using NAD as a coenzyme and as the energy source for the reaction. It is essential for DNA replication and repair of damaged DNA. The sequence is that of DNA ligase from Caulobacter vibrioides (strain ATCC 19089 / CIP 103742 / CB 15) (Caulobacter crescentus).